Here is a 74-residue protein sequence, read N- to C-terminus: Major structural pilin EpdE (74 aa).

A propeptide spanning residues 1–12 (MKFLEKLTSKKG) is cleaved from the precursor. Pyrrolidone carboxylic acid is present on Gln13. The QXSXEXXXL signature appears at 13 to 21 (QIAMELGIL).

The N-terminus is cleaved by the prepilin peptidase EppA, which recognizes the class III signal sequence. Post-translationally, N-glycosylated. Glycosylated with an N-linked branched pentasaccharide glycan. May contain glycans at three sites. Glycosylation is AglB-dependent. The N-glycosylation does not occur unless the signal peptide has been cleaved first.

The protein localises to the secreted. The protein resides in the cell surface. It is found in the fimbrium. Major component of the type IV-like pili. This is Major structural pilin EpdE from Methanococcus maripaludis (strain DSM 14266 / JCM 13030 / NBRC 101832 / S2 / LL).